The following is a 135-amino-acid chain: Ribonuclease P protein component (135 aa).

Belongs to the RnpA family. As to quaternary structure, consists of a catalytic RNA component (M1 or rnpB) and a protein subunit.

It catalyses the reaction Endonucleolytic cleavage of RNA, removing 5'-extranucleotides from tRNA precursor.. Functionally, RNaseP catalyzes the removal of the 5'-leader sequence from pre-tRNA to produce the mature 5'-terminus. It can also cleave other RNA substrates such as 4.5S RNA. The protein component plays an auxiliary but essential role in vivo by binding to the 5'-leader sequence and broadening the substrate specificity of the ribozyme. This chain is Ribonuclease P protein component, found in Xylella fastidiosa (strain 9a5c).